The chain runs to 551 residues: Glucose-6-phosphate isomerase 2 (551 aa).

E359 acts as the Proton donor in catalysis. Active-site residues include H390 and K514.

Belongs to the GPI family.

It is found in the cytoplasm. The enzyme catalyses alpha-D-glucose 6-phosphate = beta-D-fructose 6-phosphate. It participates in carbohydrate biosynthesis; gluconeogenesis. Its pathway is carbohydrate degradation; glycolysis; D-glyceraldehyde 3-phosphate and glycerone phosphate from D-glucose: step 2/4. In terms of biological role, catalyzes the reversible isomerization of glucose-6-phosphate to fructose-6-phosphate. The sequence is that of Glucose-6-phosphate isomerase 2 from Streptomyces coelicolor (strain ATCC BAA-471 / A3(2) / M145).